Reading from the N-terminus, the 354-residue chain is Protein-arginine kinase (354 aa).

In terms of domain architecture, Phosphagen kinase C-terminal spans 24–254 (IVLSSRIRLA…QQIIHQEKTA (231 aa)). Residues 27-31 (SSRIR), histidine 92, arginine 125, 176-180 (RASVM), and 207-212 (RGIYGE) each bind ATP. Residues 337–342 (RDYRRA) carry the RDXXRA motif of the pArg binding pocket involved in allosteric regulation motif.

This sequence belongs to the ATP:guanido phosphotransferase family.

It catalyses the reaction L-arginyl-[protein] + ATP = N(omega)-phospho-L-arginyl-[protein] + ADP + H(+). With respect to regulation, appears to be allosterically activated by the binding of pArg-containing polypeptides to the pArg-binding pocket localized in the C-terminal domain of McsB. Its function is as follows. Catalyzes the specific phosphorylation of arginine residues in a large number of proteins. Is part of the bacterial stress response system. Protein arginine phosphorylation has a physiologically important role and is involved in the regulation of many critical cellular processes, such as protein homeostasis, motility, competence, and stringent and stress responses, by regulating gene expression and protein activity. This Bacillus mycoides (strain KBAB4) (Bacillus weihenstephanensis) protein is Protein-arginine kinase.